We begin with the raw amino-acid sequence, 412 residues long: L-cysteine:1D-myo-inositol 2-amino-2-deoxy-alpha-D-glucopyranoside ligase (412 aa).

Position 43 (C43) interacts with Zn(2+). L-cysteinyl-5'-AMP is bound by residues 43–46 (CGIT), T58, and 81–83 (NVT). A 'HIGH' region motif is present at residues 45-55 (ITPYDATHLGH). Positions 187–192 (ERGGDP) match the 'ERGGDP' region motif. W227 serves as a coordination point for L-cysteinyl-5'-AMP. Residue C231 participates in Zn(2+) binding. An L-cysteinyl-5'-AMP-binding site is contributed by 249–251 (GSD). Residue H256 coordinates Zn(2+). I283 is a binding site for L-cysteinyl-5'-AMP. The short motif at 289 to 293 (KMSKS) is the 'KMSKS' region element.

The protein belongs to the class-I aminoacyl-tRNA synthetase family. MshC subfamily. In terms of assembly, monomer. Zn(2+) is required as a cofactor.

It carries out the reaction 1D-myo-inositol 2-amino-2-deoxy-alpha-D-glucopyranoside + L-cysteine + ATP = 1D-myo-inositol 2-(L-cysteinylamino)-2-deoxy-alpha-D-glucopyranoside + AMP + diphosphate + H(+). In terms of biological role, catalyzes the ATP-dependent condensation of GlcN-Ins and L-cysteine to form L-Cys-GlcN-Ins. The polypeptide is L-cysteine:1D-myo-inositol 2-amino-2-deoxy-alpha-D-glucopyranoside ligase (mshC) (Mycolicibacterium smegmatis (strain ATCC 700084 / mc(2)155) (Mycobacterium smegmatis)).